The chain runs to 275 residues: Bis(5'-nucleosyl)-tetraphosphatase, symmetrical (275 aa).

It belongs to the Ap4A hydrolase family.

The enzyme catalyses P(1),P(4)-bis(5'-adenosyl) tetraphosphate + H2O = 2 ADP + 2 H(+). Its function is as follows. Hydrolyzes diadenosine 5',5'''-P1,P4-tetraphosphate to yield ADP. This is Bis(5'-nucleosyl)-tetraphosphatase, symmetrical from Stutzerimonas stutzeri (strain A1501) (Pseudomonas stutzeri).